A 217-amino-acid polypeptide reads, in one-letter code: Magnetosome protein MamA (217 aa).

TPR repeat units lie at residues 12–44 (VTLYTHYGLSVAKKLGANMVDAFRSAFSVNDDI), 46–79 (QVYYRDKGISHAKAGRYSEAVVMLEQVYDADAFD), 80–113 (VEVALHLGIAYVKTGAVDRGTELLERSIADAPDN), 114–147 (IKVATVLGLTYVQVQKYDLAVPLLVKVAEANPVN), 148–181 (FNVRFRLGVALDNLGRFDEAIDSFKIALGLRPNE), and 182–215 (GKVHRAIAYSYEQMGSHEEALPHFKKANELDERS). The interval 41-112 (NDDIRQVYYR…LERSIADAPD (72 aa)) is N-terminal domain. A C-terminal domain region spans residues 113 to 217 (NIKVATVLGL…ANELDERSAV (105 aa)).

This sequence belongs to the magnetosome MamA family. As to quaternary structure, forms round, 20 nm diameter complexes with a central cavity. Probably binds MamC. Interacts with full-length Mms6.

Its subcellular location is the magnetosome membrane. Probably forms a large homooligomer on which other magnetosome subunits assemble. Required for formation of functional magnetosomes from pre-existing vesicles. This chain is Magnetosome protein MamA, found in Magnetospirillum gryphiswaldense (strain DSM 6361 / JCM 21280 / NBRC 15271 / MSR-1).